We begin with the raw amino-acid sequence, 117 residues long: Large ribosomal subunit protein bL20 (117 aa).

This sequence belongs to the bacterial ribosomal protein bL20 family.

Functionally, binds directly to 23S ribosomal RNA and is necessary for the in vitro assembly process of the 50S ribosomal subunit. It is not involved in the protein synthesizing functions of that subunit. The protein is Large ribosomal subunit protein bL20 of Rickettsia typhi (strain ATCC VR-144 / Wilmington).